Consider the following 302-residue polypeptide: Sulfate adenylyltransferase subunit 2 (302 aa).

This sequence belongs to the PAPS reductase family. CysD subfamily. Heterodimer composed of CysD, the smaller subunit, and CysN.

It catalyses the reaction sulfate + ATP + H(+) = adenosine 5'-phosphosulfate + diphosphate. The protein operates within sulfur metabolism; hydrogen sulfide biosynthesis; sulfite from sulfate: step 1/3. Functionally, with CysN forms the ATP sulfurylase (ATPS) that catalyzes the adenylation of sulfate producing adenosine 5'-phosphosulfate (APS) and diphosphate, the first enzymatic step in sulfur assimilation pathway. APS synthesis involves the formation of a high-energy phosphoric-sulfuric acid anhydride bond driven by GTP hydrolysis by CysN coupled to ATP hydrolysis by CysD. This is Sulfate adenylyltransferase subunit 2 from Erwinia tasmaniensis (strain DSM 17950 / CFBP 7177 / CIP 109463 / NCPPB 4357 / Et1/99).